A 251-amino-acid polypeptide reads, in one-letter code: Adenosylcobinamide-GDP ribazoletransferase (251 aa).

5 consecutive transmembrane segments (helical) span residues 44–64 (LVGL…LLAG), 114–134 (IGAF…VLAH), 143–163 (GALV…AACV), 177–197 (AGAT…TGVA), and 198–218 (LAGP…VVWL).

The protein belongs to the CobS family. The cofactor is Mg(2+).

The protein localises to the cell inner membrane. The catalysed reaction is alpha-ribazole + adenosylcob(III)inamide-GDP = adenosylcob(III)alamin + GMP + H(+). It carries out the reaction alpha-ribazole 5'-phosphate + adenosylcob(III)inamide-GDP = adenosylcob(III)alamin 5'-phosphate + GMP + H(+). Its pathway is cofactor biosynthesis; adenosylcobalamin biosynthesis; adenosylcobalamin from cob(II)yrinate a,c-diamide: step 7/7. In terms of biological role, joins adenosylcobinamide-GDP and alpha-ribazole to generate adenosylcobalamin (Ado-cobalamin). Also synthesizes adenosylcobalamin 5'-phosphate from adenosylcobinamide-GDP and alpha-ribazole 5'-phosphate. In Nitratidesulfovibrio vulgaris (strain DSM 19637 / Miyazaki F) (Desulfovibrio vulgaris), this protein is Adenosylcobinamide-GDP ribazoletransferase.